A 330-amino-acid polypeptide reads, in one-letter code: Lymphocyte-specific protein 1 (330 aa).

2 stretches are compositionally biased toward basic and acidic residues: residues 1–20 (MAEA…HAED) and 37–62 (AREQ…DGGH). Disordered regions lie at residues 1–246 (MAEA…SIEL) and 281–302 (DMSK…TIKS). A compositionally biased stretch (polar residues) spans 66-77 (QPGQQTLISLKS). 2 positions are modified to phosphoserine; by CK2: S77 and S78. Positions 113 to 135 (QSERPEEKQTEESSHQAKVHLEE) are enriched in basic and acidic residues. Residue T166 is modified to Phosphothreonine. Phosphoserine occurs at positions 168, 179, 180, and 184. Composition is skewed to polar residues over residues 206-215 (VKKSQPTLPI) and 223-242 (QQYT…SRQP). S243 is modified (phosphoserine; by MAPKAPK2). Low complexity predominate over residues 291–302 (KGGSKISSTIKS). K318 carries the N6-acetyllysine modification.

Post-translationally, phosphorylated by casein kinase II, protein kinase C and MAPKAPK2. Phosphorylation by PKC induces translocation from membrane to cytoplasm. Phosphorylation by MAPKAPK2 may regulate neutrophil chemotaxis. In terms of tissue distribution, isoform 1 is expressed in normal mouse B and T-lymphocytes and in transformed B-cells but not (or in smaller amounts) in nine T-lymphoma lines tested. Isoform 2 is expressed in non-lymphoid cell lines (myocytes, stromal cells, fibroblasts).

It is found in the cell membrane. May play a role in mediating neutrophil activation and chemotaxis. The polypeptide is Lymphocyte-specific protein 1 (Lsp1) (Mus musculus (Mouse)).